The chain runs to 459 residues: Cysteine--tRNA ligase (459 aa).

Cysteine 28 serves as a coordination point for Zn(2+). The 'HIGH' region signature appears at 30–40; sequence ITIYDLCHIGH. Zn(2+) contacts are provided by cysteine 209, histidine 234, and glutamate 238. The short motif at 266-270 is the 'KMSKS' region element; the sequence is KMSKS. An ATP-binding site is contributed by lysine 269.

It belongs to the class-I aminoacyl-tRNA synthetase family. In terms of assembly, monomer. Zn(2+) serves as cofactor.

The protein localises to the cytoplasm. The catalysed reaction is tRNA(Cys) + L-cysteine + ATP = L-cysteinyl-tRNA(Cys) + AMP + diphosphate. The polypeptide is Cysteine--tRNA ligase (Shewanella sediminis (strain HAW-EB3)).